The following is a 198-amino-acid chain: Protein hunchback (198 aa).

Disordered stretches follow at residues 16–117 and 152–198; these read SHHH…PMQS and NDKL…KYMA. Positions 17-31 are enriched in basic residues; that stretch reads HHHHHHHAHHSHHQH. 2 stretches are compositionally biased toward low complexity: residues 35–46 and 68–83; these read SNSNSNASSPHQ and QQQQ…QQQQ. Positions 95-105 are enriched in polar residues; the sequence is PSPSNNDQNSP. Over residues 179-198 the composition is skewed to basic and acidic residues; the sequence is EPEKEHDLMSNSSEDMKYMA.

The protein belongs to the hunchback C2H2-type zinc-finger protein family.

The protein localises to the nucleus. Functionally, gap class segmentation protein that controls development of head structures. This chain is Protein hunchback (hb), found in Drosophila disjuncta (Fruit fly).